The primary structure comprises 153 residues: Ribonuclease H (153 aa).

Positions Met1–Glu142 constitute an RNase H type-1 domain. Mg(2+)-binding residues include Asp10, Glu48, Asp70, and Asp134.

Belongs to the RNase H family. As to quaternary structure, monomer. Mg(2+) is required as a cofactor.

The protein localises to the cytoplasm. The enzyme catalyses Endonucleolytic cleavage to 5'-phosphomonoester.. Endonuclease that specifically degrades the RNA of RNA-DNA hybrids. The polypeptide is Ribonuclease H (Baumannia cicadellinicola subsp. Homalodisca coagulata).